A 116-amino-acid polypeptide reads, in one-letter code: Ly-6/neurotoxin-like protein 1 (116 aa).

The signal sequence occupies residues 1–20; it reads MTPLLTLILVVLMGLPLAQA. The UPAR/Ly6 domain occupies 21–105; the sequence is LDCHVCAYNG…LATPATLALA (85 aa). Cystine bridges form between Cys23-Cys46, Cys26-Cys33, Cys39-Cys64, Cys68-Cys85, and Cys86-Cys91. Residue Asn92 is the site of GPI-anchor amidated asparagine attachment. A propeptide spans 93 to 116 (removed in mature form); it reads GAGLATPATLALAPILLATLWGLL.

In terms of assembly, interacts with nAChRs containing alpha-4:beta-2 (CHRNA4:CHRNB2) and alpha-7 (CHRNA7) subunits. Interacts with CHRNA4 probably in the endoplasmic reticulum prior to nAChR pentameric assembly. Interacts with KCNA2/Potassium voltage-gated channel subfamily A member 2.

It localises to the cell membrane. The protein localises to the cell projection. The protein resides in the dendrite. It is found in the endoplasmic reticulum. In terms of biological role, acts in different tissues through interaction to nicotinic acetylcholine receptors (nAChRs). The proposed role as modulator of nAChR activity seems to be dependent on the nAChR subtype and stoichiometry, and to involve an effect on nAChR trafficking and its cell surface expression, and on single channel properties of the nAChR inserted in the plasma membrane. Modulates functional properties of nicotinic acetylcholine receptors (nAChRs) to prevent excessive excitation, and hence neurodegeneration. Enhances desensitization by increasing both the rate and extent of desensitization of alpha-4:beta-2-containing nAChRs and slowing recovery from desensitization. Promotes large amplitude ACh-evoked currents through alpha-4:beta-2 nAChRs. Is involved in regulation of the nAChR pentameric assembly in the endoplasmic reticulum. Shifts stoichiometry from high sensitivity alpha-4(2):beta-2(3) to low sensitivity alpha-4(3):beta-2(2) nAChR. In vitro modulates alpha-3:beta-4-containing nAChRs. Reduces cell surface expression of (alpha-3:beta-4)(2):beta-4 and (alpha-3:beta-4)(2):alpha-5 nAChRs suggesting an interaction with nAChR alpha-3(-):(+)beta-4 subunit interfaces and an allosteric mode. Corresponding single channel effects characterized by decreased unitary conductance, altered burst proportions and enhanced desensitization/inactivation seem to depend on nAChR alpha:alpha subunit interfaces and are greater in (alpha-3:beta-2)(2):alpha-3 when compared to (alpha-3:beta-2)(2):alpha-5 nAChRs. Prevents plasticity in the primary visual cortex late in life. This chain is Ly-6/neurotoxin-like protein 1, found in Pan troglodytes (Chimpanzee).